We begin with the raw amino-acid sequence, 443 residues long: EGF-containing fibulin-like extracellular matrix protein 2 (443 aa).

Positions 1–23 (MLPCASCLPGSLLLWALLLLLLG) are cleaved as a signal peptide. The 46-residue stretch at 36 to 81 (YTECTDGYEWDPDSQHCRDVNECLTIPEACKGEMKCINHYGGYLCL) folds into the EGF-like 1; atypical domain. Intrachain disulfides connect Cys-58/Cys-121, Cys-65/Cys-80, Cys-71/Cys-109, Cys-127/Cys-140, Cys-134/Cys-149, Cys-151/Cys-162, Cys-168/Cys-177, Cys-173/Cys-186, Cys-188/Cys-201, Cys-207/Cys-217, Cys-213/Cys-226, Cys-228/Cys-241, Cys-247/Cys-258, Cys-254/Cys-267, Cys-269/Cys-281, Cys-287/Cys-300, Cys-294/Cys-309, and Cys-315/Cys-327. Residues 123–163 (DVDECAQALHDCRPSQDCHNLPGSYQCTCPDGYRKIGPECV) enclose the EGF-like 2; calcium-binding domain. Residues 164–202 (DIDECRYRYCQHRCVNLPGSFRCQCEPGFQLGPNNRSCV) form the EGF-like 3; calcium-binding domain. The N-linked (GlcNAc...) asparagine glycan is linked to Asn-198. The EGF-like 4; calcium-binding domain maps to 203–242 (DVNECDMGAPCEQRCFNSYGTFLCRCHQGYELHRDGFSCS). Positions 243–282 (DIDECSYSSYLCQYRCINEPGRFSCHCPQGYQLLATRLCQ) constitute an EGF-like 5; calcium-binding domain. In terms of domain architecture, EGF-like 6; calcium-binding spans 283–328 (DIDECESGAHQCSEAQTCVNFHGGYRCVDTNRCVEPYIQVSENRCL). A glycan (N-linked (GlcNAc...) asparagine) is linked at Asn-394.

This sequence belongs to the fibulin family. As to quaternary structure, homodimer; disulfide-linked. Multimer; allows heparin binding. Monomer. Interacts with FBN1 (via N-terminal domain); this interaction inhibits EFEMP2 binding to LOX and ELN. Interacts with LOX (via propeptide); this interaction is strong and facilitates formation of ternary complexes with ELN during elastic fiber assembly; this interaction limits interaction of EFEMP2 with FBLN5. Interacts with PITX2. Interacts with ELN with moderate affinity; this interaction regulates ELN self-assembly maturation stage. Interacts with FBLN5 with moderate affinity. Interacts with LOXL1 (via propeptide), LTBP1 and TGFB1 stronger than with LOXL2 and LTBP3. Interacts with PCOLCE. Interacts with collagen type IV trimer (COL4A1-COL4A1-COL4A2), NID2 and moderately with COL15A1-derived endostatin. Interacts with EMILIN1; this interaction promotes the incorporation of EFEMP2 into the extracellular matrix. Interacts with LTBP4; the LTBP4 long form (LTBP4L) has a stronger binding affinity than the LTBP4 short form and the LTBP4 long form promotes fibrillar deposition of EFEMP2. Post-translationally, N-glycosylated; contains mostly complex-type glycans. Not O-glycosylated. Cleaved by ELANE; produces a 50-55 kDa fragment. Cleaved by MMP2 and MMP9; produces several fragments.

It localises to the secreted. The protein localises to the extracellular space. The protein resides in the extracellular matrix. Its subcellular location is the basement membrane. Its function is as follows. Plays a crucial role in elastic fiber formation in tissue, and in the formation of ultrastructural connections between elastic laminae and smooth muscle cells in the aorta, therefore participates in terminal differentiation and maturation of smooth muscle cell (SMC) and in the mechanical properties and wall integrity maintenance of the aorta. In addition, is involved in the control of collagen fibril assembly in tissue throught proteolytic activation of LOX leading to cross- linking of collagen and elastin. Also promotes ELN coacervation and participates in the deposition of ELN coacervates on to microfibrils but also regulates ELN cross- linking through LOX interaction. Moreover adheres to the cells through heparin binding in a calcium-dependent manner and regulates vascularlar smooth muscle cells proliferation through angiotensin signaling. This Homo sapiens (Human) protein is EGF-containing fibulin-like extracellular matrix protein 2.